Consider the following 1039-residue polypeptide: uncharacterized protein (1039 aa).

The N-terminal stretch at 1–28 (MKLFPRTLLKILVVSFILNFGVTSKSYA) is a signal peptide. The next 6 helical transmembrane spans lie at 326-346 (IVTAFLTLYVMLFGAKILLAG), 354-374 (YINFILKIIFVTYFSIGLNIT), 387-407 (MIQWAFPFLLNGINGLASWVM), 491-511 (MLVSLALAYPLLVISVAAFMV), 517-537 (CMVSIVILGILAPLFVPMFLF), and 551-571 (MISFLLQPMVVVTFMITMFSV). The disordered stretch occupies residues 654-680 (KPNQTCDPKAADADTKCNPKPGDSSTS). The helical transmembrane segment at 710–730 (IKDILLALVTACFTLYLMYNF) threads the bilayer. Disordered regions lie at residues 799 to 875 (LVKG…PTTV), 917 to 949 (IKEAVPESQKEEPKEPRVKHTTEVEPELNLDEN), and 1004 to 1039 (LYRSVGGRAKDKATERNDGTIENRSKKIDSGSDENP). The segment covering 802-811 (GSGGGGGSEG) has biased composition (gly residues). The span at 812–836 (GDSFTSGGLRETSSTAATPSSALSS) shows a compositional bias: low complexity. A compositionally biased stretch (polar residues) spans 843-861 (GTATPSSASEEMLDTSFSN). Basic and acidic residues-rich tracts occupy residues 917-939 (IKEAVPESQKEEPKEPRVKHTTE) and 1004-1033 (LYRSVGGRAKDKATERNDGTIENRSKKIDS).

It belongs to the TrbL/VirB6 family.

It localises to the cell membrane. This is an uncharacterized protein from Rickettsia bellii (strain RML369-C).